The chain runs to 419 residues: MTQEQANQSETKPAFDFKPFAPGYAEDPFPAIERLREATPIFYWDEGRSWVLTRYHDVSAVFRDERFAVSREEWESSAEYSSAIPELSDMKKYGLFGLPPEDHARVRKLVNPSFTSRAIDLLRAEIQRTVDQLLDARSGQEEFDVVRDYAEGIPMRAISALLKVPAECDEKFRRFGSATARALGVGLVPRVDEETKTLVASVTEGLALLHGVLDERRRNPLENDVLTMLLQAEADGSRLSTKELVALVGAIIAAGTDTTIYLIAFAVLNLLRSPEALELVKAEPGLMRNALDEVLRFDNILRIGTVRFARQDLEYCGASIKKGEMVFLLIPSALRDGTVFSRPDVFDVRRDTSASLAYGRGPHVCPGVSLARLEAEIAVGTIFRRFPEMKLKETPVFGYHPAFRNIESLNVILKPSKAG.

Residues A180 and G304 each contribute to the substrate site. Residue C365 participates in heme binding.

This sequence belongs to the cytochrome P450 family. It depends on heme as a cofactor.

It catalyses the reaction epothilone C + 2 reduced [2Fe-2S]-[ferredoxin] + O2 + 2 H(+) = epothilone A + 2 oxidized [2Fe-2S]-[ferredoxin] + H2O. The catalysed reaction is epothilone D + 2 reduced [2Fe-2S]-[ferredoxin] + O2 + 2 H(+) = epothilone B + 2 oxidized [2Fe-2S]-[ferredoxin] + H2O. It functions in the pathway secondary metabolite biosynthesis; epothilone biosynthesis. Its function is as follows. Involved in the biosynthesis of epothilones, macrolactones which have a narrow anti-fungal spectrum and microtubule-stabilizing activity. Catalyzes the epoxidation of epothilones C and D to epothilones A and B, respectively. This chain is Epothilone C/D epoxidase (cyp167A1), found in Sorangium cellulosum (Polyangium cellulosum).